The primary structure comprises 432 residues: MSNNVVVLGTQWGDEGKGKIVDLLTERAKYVVRYQGGHNAGHTLVIDGEKTVLHLIPSGILRENVVSIIANGVVLSPEALMKEMTQLEERGIPVRSRLLLSEACPLILPYHIALDNAREKARGEKAIGTTGRGIGPAYEDKVARRGLRVGDLFDKKAFAQKLKEIIEYHNFQLVNYYKVEPVDYQKTLDDIMAIADILTGMVVDVSDLLYKATQKGELVMFEGAQGTLLDIDHGTYPYVTSSNTTAGGVATGSGLGPRYVGYVLGIIKAYSTRVGAGPFPTELFDETGDFLREKGQEFGATTGRSRRTGWLDIIAIRRAVQINSLSGFCMTKLDVLDGLKEVKVCVGYRLPNGEVIETTPLAADDWEGIEPIYESMPGWNESTFGVKDKAQLPQAALNYIKRVEELTGVPVDIVSTGPDRSETIILRHPFDA.

GTP is bound by residues 13 to 19 (GDEGKGK) and 41 to 43 (GHT). Residue Asp14 is the Proton acceptor of the active site. Mg(2+) contacts are provided by Asp14 and Gly41. IMP contacts are provided by residues 14–17 (DEGK), 39–42 (NAGH), Thr130, Arg144, Gln225, Thr240, and Arg304. His42 (proton donor) is an active-site residue. 300–306 (ATTGRSR) is a substrate binding site. Residues Arg306, 332–334 (KLD), and 415–417 (STG) each bind GTP.

It belongs to the adenylosuccinate synthetase family. In terms of assembly, homodimer. Mg(2+) is required as a cofactor.

It localises to the cytoplasm. The catalysed reaction is IMP + L-aspartate + GTP = N(6)-(1,2-dicarboxyethyl)-AMP + GDP + phosphate + 2 H(+). It participates in purine metabolism; AMP biosynthesis via de novo pathway; AMP from IMP: step 1/2. Plays an important role in the de novo pathway of purine nucleotide biosynthesis. Catalyzes the first committed step in the biosynthesis of AMP from IMP. The polypeptide is Adenylosuccinate synthetase (Proteus mirabilis (strain HI4320)).